The following is a 187-amino-acid chain: dCTP deaminase (187 aa).

DCTP-binding positions include 110–115 (KSTYAR), 134–136 (TLE), glutamine 155, tyrosine 169, and glutamine 179. Glutamate 136 functions as the Proton donor/acceptor in the catalytic mechanism.

The protein belongs to the dCTP deaminase family. In terms of assembly, homotrimer.

It catalyses the reaction dCTP + H2O + H(+) = dUTP + NH4(+). It participates in pyrimidine metabolism; dUMP biosynthesis; dUMP from dCTP (dUTP route): step 1/2. Catalyzes the deamination of dCTP to dUTP. The polypeptide is dCTP deaminase (Bordetella pertussis (strain Tohama I / ATCC BAA-589 / NCTC 13251)).